An 88-amino-acid polypeptide reads, in one-letter code: HssA/B-like protein 12 (88 aa).

This sequence belongs to the hssA/B family.

The protein is HssA/B-like protein 12 (hssl12) of Dictyostelium discoideum (Social amoeba).